A 455-amino-acid chain; its full sequence is Glutamyl-tRNA reductase (455 aa).

Substrate is bound by residues 49-52 (TCNR), Ser-109, 114-116 (ETQ), and Gln-120. Residue Cys-50 is the Nucleophile of the active site. 189–194 (GAGKMG) serves as a coordination point for NADP(+).

This sequence belongs to the glutamyl-tRNA reductase family. Homodimer.

It carries out the reaction (S)-4-amino-5-oxopentanoate + tRNA(Glu) + NADP(+) = L-glutamyl-tRNA(Glu) + NADPH + H(+). The protein operates within porphyrin-containing compound metabolism; protoporphyrin-IX biosynthesis; 5-aminolevulinate from L-glutamyl-tRNA(Glu): step 1/2. Catalyzes the NADPH-dependent reduction of glutamyl-tRNA(Glu) to glutamate 1-semialdehyde (GSA). This Bacillus pumilus (strain SAFR-032) protein is Glutamyl-tRNA reductase.